A 148-amino-acid chain; its full sequence is Putative ankyrin repeat protein RF_1158 (148 aa).

One copy of the ANK repeat lies at 82 to 115 (RPTTALGIAIAQGNSEEVIKYLLANGADPKLAFD).

The chain is Putative ankyrin repeat protein RF_1158 from Rickettsia felis (strain ATCC VR-1525 / URRWXCal2) (Rickettsia azadi).